Reading from the N-terminus, the 217-residue chain is 3,4-dihydroxy-2-butanone 4-phosphate synthase (217 aa).

D-ribulose 5-phosphate-binding positions include 37–38 (RE), aspartate 42, 150–154 (RGGHT), and glutamate 174. Glutamate 38 is a Mg(2+) binding site. Histidine 153 is a binding site for Mg(2+).

The protein belongs to the DHBP synthase family. As to quaternary structure, homodimer. Mg(2+) is required as a cofactor. Requires Mn(2+) as cofactor.

It catalyses the reaction D-ribulose 5-phosphate = (2S)-2-hydroxy-3-oxobutyl phosphate + formate + H(+). It participates in cofactor biosynthesis; riboflavin biosynthesis; 2-hydroxy-3-oxobutyl phosphate from D-ribulose 5-phosphate: step 1/1. Its function is as follows. Catalyzes the conversion of D-ribulose 5-phosphate to formate and 3,4-dihydroxy-2-butanone 4-phosphate. The sequence is that of 3,4-dihydroxy-2-butanone 4-phosphate synthase from Escherichia fergusonii (strain ATCC 35469 / DSM 13698 / CCUG 18766 / IAM 14443 / JCM 21226 / LMG 7866 / NBRC 102419 / NCTC 12128 / CDC 0568-73).